The sequence spans 214 residues: Thymidylate kinase (214 aa).

Glycine 7–serine 14 serves as a coordination point for ATP.

This sequence belongs to the thymidylate kinase family.

The catalysed reaction is dTMP + ATP = dTDP + ADP. Its function is as follows. Phosphorylation of dTMP to form dTDP in both de novo and salvage pathways of dTTP synthesis. The polypeptide is Thymidylate kinase (Chlorobaculum tepidum (strain ATCC 49652 / DSM 12025 / NBRC 103806 / TLS) (Chlorobium tepidum)).